The chain runs to 249 residues: Eukaryotic translation initiation factor 3 subunit K (249 aa).

The 177-residue stretch at 46–222 (FDCYANLALL…VKVPTNKENE (177 aa)) folds into the PCI domain.

This sequence belongs to the eIF-3 subunit K family. In terms of assembly, component of the eukaryotic translation initiation factor 3 (eIF-3) complex.

It is found in the cytoplasm. Functionally, component of the eukaryotic translation initiation factor 3 (eIF-3) complex, which is involved in protein synthesis of a specialized repertoire of mRNAs and, together with other initiation factors, stimulates binding of mRNA and methionyl-tRNAi to the 40S ribosome. The eIF-3 complex specifically targets and initiates translation of a subset of mRNAs involved in cell proliferation. This Aspergillus fumigatus (strain CBS 144.89 / FGSC A1163 / CEA10) (Neosartorya fumigata) protein is Eukaryotic translation initiation factor 3 subunit K.